A 20-amino-acid polypeptide reads, in one-letter code: Unknown protein NF042 from 2D-PAGE (20 aa).

This chain is Unknown protein NF042 from 2D-PAGE, found in Naegleria fowleri (Brain eating amoeba).